A 112-amino-acid chain; its full sequence is Frizzy aggregation protein FrzB (112 aa).

Functionally, necessary for proper aggregation of cells to form fruiting bodies. FRZ genes define a system of signal transduction analogous to the enterobacterial chemotaxis systems. This chain is Frizzy aggregation protein FrzB (frzB), found in Myxococcus xanthus.